A 228-amino-acid chain; its full sequence is 2-phospho-L-lactate guanylyltransferase (228 aa).

It belongs to the CofC family. As to quaternary structure, homodimer.

It carries out the reaction (2S)-2-phospholactate + GTP + H(+) = (2S)-lactyl-2-diphospho-5'-guanosine + diphosphate. It participates in cofactor biosynthesis; coenzyme F420 biosynthesis. Its function is as follows. Guanylyltransferase that catalyzes the activation of (2S)-2-phospholactate (2-PL) as (2S)-lactyl-2-diphospho-5'-guanosine, via the condensation of 2-PL with GTP. It is involved in the biosynthesis of coenzyme F420, a hydride carrier cofactor. The sequence is that of 2-phospho-L-lactate guanylyltransferase from Methanosphaera stadtmanae (strain ATCC 43021 / DSM 3091 / JCM 11832 / MCB-3).